Consider the following 267-residue polypeptide: Urease accessory protein UreD 2 (267 aa).

This sequence belongs to the UreD family. UreD, UreF and UreG form a complex that acts as a GTP-hydrolysis-dependent molecular chaperone, activating the urease apoprotein by helping to assemble the nickel containing metallocenter of UreC. The UreE protein probably delivers the nickel.

The protein localises to the cytoplasm. Required for maturation of urease via the functional incorporation of the urease nickel metallocenter. In Synechococcus sp. (strain JA-3-3Ab) (Cyanobacteria bacterium Yellowstone A-Prime), this protein is Urease accessory protein UreD 2.